Here is a 320-residue protein sequence, read N- to C-terminus: Cytochrome f (320 aa).

The N-terminal stretch at 1–35 is a signal peptide; sequence MNFFTHKKNNFGSFVTIFSFLVALGVTNLTPAAEA. 4 residues coordinate heme: Y36, C56, C59, and H60. A helical membrane pass occupies residues 286-306; that stretch reads IQGLLVFFATVLFAQVLLVLK.

It belongs to the cytochrome f family. The 4 large subunits of the cytochrome b6-f complex are cytochrome b6, subunit IV (17 kDa polypeptide, petD), cytochrome f and the Rieske protein, while the 4 small subunits are PetG, PetL, PetM and PetN. The complex functions as a dimer. It depends on heme as a cofactor.

Its subcellular location is the plastid. It is found in the chloroplast thylakoid membrane. Functionally, component of the cytochrome b6-f complex, which mediates electron transfer between photosystem II (PSII) and photosystem I (PSI), cyclic electron flow around PSI, and state transitions. This is Cytochrome f from Tetradesmus obliquus (Green alga).